The sequence spans 550 residues: Coiled-coil domain-containing protein 60 (550 aa).

The disordered stretch occupies residues 1 to 21; it reads MTKVPATKKLQSSPNSGAVRP. Residues 71–98 adopt a coiled-coil conformation; the sequence is AILREETAKKKKQQQLQKLKEEERNKFQ. 2 disordered regions span residues 219 to 293 and 336 to 367; these read KFKI…EPLY and AYKEMQTTLKSSERSSSTSAESHIQPVQKKSK. Residues 235 to 256 are compositionally biased toward low complexity; sequence RGSTLSLSRASGGSSPQSSMIS. The segment covering 336-345 has biased composition (polar residues); the sequence is AYKEMQTTLK.

The chain is Coiled-coil domain-containing protein 60 (CCDC60) from Homo sapiens (Human).